The primary structure comprises 626 residues: (+)-3-carene synthase 1, chloroplastic (626 aa).

A chloroplast-targeting transit peptide spans 1–45; the sequence is MSLISAVPLASSCVSKSLISSVREHTALRRAIATLQMSRRGKSVA. Mg(2+) is bound by residues Asp377, Asp381, and Asp529. Positions 377–381 match the DDXXD motif motif; that stretch reads DDMYD.

This sequence belongs to the terpene synthase family. Tpsd subfamily. Requires Mg(2+) as cofactor. Mn(2+) is required as a cofactor.

The protein localises to the plastid. Its subcellular location is the chloroplast. The enzyme catalyses (2E)-geranyl diphosphate = (+)-car-3-ene + diphosphate. The catalysed reaction is (2E)-geranyl diphosphate = terpinolene + diphosphate. It functions in the pathway terpene metabolism; oleoresin biosynthesis. It participates in secondary metabolite biosynthesis; terpenoid biosynthesis. In terms of biological role, monoterpene synthase (TPS) involved in the biosynthesis of monoterpene natural products included in conifer oleoresin secretions and volatile emissions; these compounds contribute to biotic and abiotic stress defense against herbivores and pathogens. Catalyzes the conversion of (2E)-geranyl diphosphate (GPP) to (+)-car-3-ene and, to a lower extent, to terpinolene. The polypeptide is (+)-3-carene synthase 1, chloroplastic (Pinus contorta (Shore pine)).